The chain runs to 78 residues: UPF0270 protein ECA4061 (78 aa).

The protein belongs to the UPF0270 family.

The polypeptide is UPF0270 protein ECA4061 (Pectobacterium atrosepticum (strain SCRI 1043 / ATCC BAA-672) (Erwinia carotovora subsp. atroseptica)).